The following is a 226-amino-acid chain: CRISPR-associated endonuclease Cas3-HD (226 aa).

The HD Cas3-type domain occupies 9–204 (GRDCLQTYED…HVLTVCDNWG (196 aa)). Residues Asp-56, His-74, His-101, and His-102 each contribute to the Mg(2+) site.

This sequence belongs to the CRISPR-associated nuclease Cas3-HD family. In terms of assembly, monomer. Can form a Cascade complex with Csa5, Cas7, Cas5a, Cas3 and Cas8a2. Requires Mg(2+) as cofactor.

Functionally, CRISPR (clustered regularly interspaced short palindromic repeat), is an adaptive immune system that provides protection against mobile genetic elements (viruses, transposable elements and conjugative plasmids). CRISPR clusters contain sequences complementary to antecedent mobile elements and target invading nucleic acids. CRISPR clusters are transcribed and processed into CRISPR RNA (crRNA). Cas3 plus Cascade participate in CRISPR interference, the third stage of CRISPR immunity. Acts as a ssDNA and ssRNA nuclease, probably with both exo- and endonuclease activities. Activity is higher for DNA than RNA. The polypeptide is CRISPR-associated endonuclease Cas3-HD (cas3') (Thermoproteus tenax (strain ATCC 35583 / DSM 2078 / JCM 9277 / NBRC 100435 / Kra 1)).